Here is a 694-residue protein sequence, read N- to C-terminus: MAREYKIEDYRNFGIMAHIDAGKTTMTERILFYTGKNHKIGETHDGASTMDWMEQEQERGITITSAATTTFWHGRDGKKRRFNIIDTPGHVDFTIEVERSLRVLDGAIALLDANAGVEPQTETVWRQAEKYHVPRMVFVNKMDKIGADFYRSVEMVGSRLGAVALPVQLPIGAENDFVGVVDLIEMKALTWDGTIGAPATVGEIPADMADKAEEYREKLIELAVEIDEAAMEAYLEGTMPTNDELRALIRKGTIEVKFHPILCGTAFKNRGVQPLLDAVVEFLPAPTDVPAIKGIDVKTETETTRESSDEAPLSMLAFKIMNDPFVGSLTFARIYSGKLTKGVSLENTVKGKRERIGRMLQMHSNSREDIDEAFAGDIVALAGLKETTTGDTLCDPLKPVILERMEFPDPVIEIAIEPKTKADQEKMGIALNRLAAEDPSFRVKSDEESGQTIIAGMGELHLDILVDRMKREFKVEANAGAPQVAYRESITRAAEIDYTHKKQSGGSGQFARVKIIFEPHDGDDFIFESKIVGGSVPKEYIPGVQKGIESVMGAGPLAGFPMLGVKATLIDGAYHDVDSSVLAFEIASRAAFREGAQKAGAQLLEPIMKVEVVTPEDYVGDVIGDLNSRRGQISGTEARGIATVVNAMVPLANMFGYVNSLRSMSQGRAQYTMQFDHYEPVPTAVAQEIQKKFA.

Residues 8–287 (EDYRNFGIMA…AVVEFLPAPT (280 aa)) form the tr-type G domain. Residues 17–24 (AHIDAGKT), 86–90 (DTPGH), and 140–143 (NKMD) contribute to the GTP site.

The protein belongs to the TRAFAC class translation factor GTPase superfamily. Classic translation factor GTPase family. EF-G/EF-2 subfamily.

It localises to the cytoplasm. In terms of biological role, catalyzes the GTP-dependent ribosomal translocation step during translation elongation. During this step, the ribosome changes from the pre-translocational (PRE) to the post-translocational (POST) state as the newly formed A-site-bound peptidyl-tRNA and P-site-bound deacylated tRNA move to the P and E sites, respectively. Catalyzes the coordinated movement of the two tRNA molecules, the mRNA and conformational changes in the ribosome. The chain is Elongation factor G from Brucella suis (strain ATCC 23445 / NCTC 10510).